The primary structure comprises 486 residues: FAD-dependent oxidoreductase domain-containing protein 1 (486 aa).

Residues 66-86 (VVVVGGGVLGLSVAYWLKQLE) form a helical membrane-spanning segment.

Associates with components of the mitochondrial respiratory chain complex I. FAD serves as cofactor.

The protein localises to the mitochondrion inner membrane. Functionally, required for the assembly of the mitochondrial membrane respiratory chain NADH dehydrogenase (Complex I). Involved in mid-late stages of complex I assembly. This is FAD-dependent oxidoreductase domain-containing protein 1 (FOXRED1) from Macaca fascicularis (Crab-eating macaque).